Reading from the N-terminus, the 136-residue chain is Transcription antitermination protein NusB (136 aa).

This sequence belongs to the NusB family.

In terms of biological role, involved in transcription antitermination. Required for transcription of ribosomal RNA (rRNA) genes. Binds specifically to the boxA antiterminator sequence of the ribosomal RNA (rrn) operons. The protein is Transcription antitermination protein NusB of Salinispora arenicola (strain CNS-205).